We begin with the raw amino-acid sequence, 217 residues long: Coiled-coil domain-containing protein 124 (217 aa).

Residues 1 to 120 (MPKKFQGENS…PVEKAKSHLE (120 aa)) form a disordered region. Positions 15 to 82 (ARARRAEAKA…LLEEEDSRLK (68 aa)) form a coiled coil. Basic and acidic residues-rich tracts occupy residues 18–74 (RRAE…QRLL) and 98–120 (QIED…SHLE). Residues serine 136 and serine 188 each carry the phosphoserine modification.

Belongs to the CCDC124 family. In terms of assembly, associates with translationally inactive ribosomes in the nonrotated state. Interacts with RASGEF1B.

The protein localises to the cytoplasm. Its subcellular location is the cytoskeleton. It is found in the microtubule organizing center. The protein resides in the centrosome. It localises to the midbody. Functionally, ribosome-binding protein involved in ribosome hibernation: associates with translationally inactive ribosomes and stabilizes the nonrotated conformation of the 80S ribosome, thereby promoting ribosome preservation and storage. Also required for proper progression of late cytokinetic stages. This is Coiled-coil domain-containing protein 124 (Ccdc124) from Mus musculus (Mouse).